Here is a 164-residue protein sequence, read N- to C-terminus: Transcription elongation factor GreA (164 aa).

Belongs to the GreA/GreB family.

Functionally, necessary for efficient RNA polymerase transcription elongation past template-encoded arresting sites. The arresting sites in DNA have the property of trapping a certain fraction of elongating RNA polymerases that pass through, resulting in locked ternary complexes. Cleavage of the nascent transcript by cleavage factors such as GreA or GreB allows the resumption of elongation from the new 3'terminus. GreA releases sequences of 2 to 3 nucleotides. The protein is Transcription elongation factor GreA of Helicobacter acinonychis (strain Sheeba).